The following is a 246-amino-acid chain: Biosynthetic peptidoglycan transglycosylase (246 aa).

Residues Trp20–Leu42 traverse the membrane as a helical segment.

The protein belongs to the glycosyltransferase 51 family.

The protein localises to the cell inner membrane. The enzyme catalyses [GlcNAc-(1-&gt;4)-Mur2Ac(oyl-L-Ala-gamma-D-Glu-L-Lys-D-Ala-D-Ala)](n)-di-trans,octa-cis-undecaprenyl diphosphate + beta-D-GlcNAc-(1-&gt;4)-Mur2Ac(oyl-L-Ala-gamma-D-Glu-L-Lys-D-Ala-D-Ala)-di-trans,octa-cis-undecaprenyl diphosphate = [GlcNAc-(1-&gt;4)-Mur2Ac(oyl-L-Ala-gamma-D-Glu-L-Lys-D-Ala-D-Ala)](n+1)-di-trans,octa-cis-undecaprenyl diphosphate + di-trans,octa-cis-undecaprenyl diphosphate + H(+). Its pathway is cell wall biogenesis; peptidoglycan biosynthesis. Functionally, peptidoglycan polymerase that catalyzes glycan chain elongation from lipid-linked precursors. The sequence is that of Biosynthetic peptidoglycan transglycosylase from Xanthomonas axonopodis pv. citri (strain 306).